Here is a 572-residue protein sequence, read N- to C-terminus: Arginine--tRNA ligase (572 aa).

Residues 122–132 (PNLAKEMHVGH) carry the 'HIGH' region motif.

The protein belongs to the class-I aminoacyl-tRNA synthetase family. In terms of assembly, monomer.

It is found in the cytoplasm. It catalyses the reaction tRNA(Arg) + L-arginine + ATP = L-arginyl-tRNA(Arg) + AMP + diphosphate. The sequence is that of Arginine--tRNA ligase from Neisseria meningitidis serogroup A / serotype 4A (strain DSM 15465 / Z2491).